We begin with the raw amino-acid sequence, 260 residues long: ATP synthase subunit a (260 aa).

Residues Met-1–Asn-11 constitute a propeptide, removed in mature form. A run of 6 helical transmembrane segments spans residues Ile-37–Leu-57, Tyr-96–Ile-116, Phe-126–Phe-146, Phe-152–Ile-172, Ile-192–Ile-212, and Leu-217–Ile-237.

The protein belongs to the ATPase A chain family. In terms of assembly, F-type ATPases have 2 components, CF(1) - the catalytic core - and CF(0) - the membrane proton channel. CF(1) has five subunits: alpha(3), beta(3), gamma(1), delta(1), epsilon(1). CF(0) has three main subunits: a, b and c.

The protein localises to the mitochondrion inner membrane. Mitochondrial membrane ATP synthase (F(1)F(0) ATP synthase or Complex V) produces ATP from ADP in the presence of a proton gradient across the membrane which is generated by electron transport complexes of the respiratory chain. F-type ATPases consist of two structural domains, F(1) - containing the extramembraneous catalytic core and F(0) - containing the membrane proton channel, linked together by a central stalk and a peripheral stalk. During catalysis, ATP synthesis in the catalytic domain of F(1) is coupled via a rotary mechanism of the central stalk subunits to proton translocation. Key component of the proton channel; it may play a direct role in the translocation of protons across the membrane. This chain is ATP synthase subunit a (ATP6), found in Candida glabrata (strain ATCC 2001 / BCRC 20586 / JCM 3761 / NBRC 0622 / NRRL Y-65 / CBS 138) (Yeast).